A 190-amino-acid polypeptide reads, in one-letter code: MLLSDRDLRAEITAGRLGIEPFDDALVQPSSVDVRLDCMFRVFNNTRYTHIDPAKQQDELTSLVEPQDGEPFVLHPGEFVLGSTLELITLPDDLAGRLEGKSSLGRLGLLTHSTAGFIDPGFSGHITLELSNVANLPITLWPGMKIGQLCILRLTSPAEHPYGSTRVGSKYQGQRGPTPSRSYQNFITST.

DCTP-binding positions include Lys101–Arg106, Asp119, Thr127–Glu129, Gln148, Tyr162, and Gln174. Glu129 serves as the catalytic Proton donor/acceptor. Positions Gly163–Thr190 are disordered. Polar residues predominate over residues Tyr171–Thr190.

Belongs to the dCTP deaminase family. In terms of assembly, homotrimer.

It catalyses the reaction dCTP + 2 H2O = dUMP + NH4(+) + diphosphate. It functions in the pathway pyrimidine metabolism; dUMP biosynthesis; dUMP from dCTP: step 1/1. Functionally, bifunctional enzyme that catalyzes both the deamination of dCTP to dUTP and the hydrolysis of dUTP to dUMP without releasing the toxic dUTP intermediate. The sequence is that of dCTP deaminase, dUMP-forming from Mycolicibacterium paratuberculosis (strain ATCC BAA-968 / K-10) (Mycobacterium paratuberculosis).